Reading from the N-terminus, the 330-residue chain is Lipoyl synthase (330 aa).

7 residues coordinate [4Fe-4S] cluster: cysteine 77, cysteine 82, cysteine 88, cysteine 103, cysteine 107, cysteine 110, and serine 317. In terms of domain architecture, Radical SAM core spans phenylalanine 89–glutamate 306.

Belongs to the radical SAM superfamily. Lipoyl synthase family. Requires [4Fe-4S] cluster as cofactor.

It localises to the cytoplasm. The catalysed reaction is [[Fe-S] cluster scaffold protein carrying a second [4Fe-4S](2+) cluster] + N(6)-octanoyl-L-lysyl-[protein] + 2 oxidized [2Fe-2S]-[ferredoxin] + 2 S-adenosyl-L-methionine + 4 H(+) = [[Fe-S] cluster scaffold protein] + N(6)-[(R)-dihydrolipoyl]-L-lysyl-[protein] + 4 Fe(3+) + 2 hydrogen sulfide + 2 5'-deoxyadenosine + 2 L-methionine + 2 reduced [2Fe-2S]-[ferredoxin]. It functions in the pathway protein modification; protein lipoylation via endogenous pathway; protein N(6)-(lipoyl)lysine from octanoyl-[acyl-carrier-protein]: step 2/2. In terms of biological role, catalyzes the radical-mediated insertion of two sulfur atoms into the C-6 and C-8 positions of the octanoyl moiety bound to the lipoyl domains of lipoate-dependent enzymes, thereby converting the octanoylated domains into lipoylated derivatives. This Actinobacillus pleuropneumoniae serotype 5b (strain L20) protein is Lipoyl synthase.